The chain runs to 316 residues: Beta-ketoacyl-[acyl-carrier-protein] synthase III (316 aa).

Catalysis depends on residues Cys-112 and His-243. Residues 244 to 248 are ACP-binding; the sequence is QANLR. Residue Asn-273 is part of the active site.

Belongs to the thiolase-like superfamily. FabH family. Homodimer.

The protein resides in the cytoplasm. It carries out the reaction malonyl-[ACP] + acetyl-CoA + H(+) = 3-oxobutanoyl-[ACP] + CO2 + CoA. It functions in the pathway lipid metabolism; fatty acid biosynthesis. Its function is as follows. Catalyzes the condensation reaction of fatty acid synthesis by the addition to an acyl acceptor of two carbons from malonyl-ACP. Catalyzes the first condensation reaction which initiates fatty acid synthesis and may therefore play a role in governing the total rate of fatty acid production. Possesses both acetoacetyl-ACP synthase and acetyl transacylase activities. Its substrate specificity determines the biosynthesis of branched-chain and/or straight-chain of fatty acids. In Haemophilus influenzae (strain 86-028NP), this protein is Beta-ketoacyl-[acyl-carrier-protein] synthase III.